The chain runs to 345 residues: MERKLMSLLPSISLSEMEPNSTLGNHNSNRSCTTENFKREFYPIVYLVIFIWGALGNGFSIYVFLKPYKKSTSVNVFMLNLAISDLLFTITLPFRVDYYLRGSNXIFGDTPCRIMSYSMYVNMYSSIYFLTVLSVVRFLATVHPFRLLHTTSIKNAWILCGVIWIFIMASSTVLLKNGSEQKDNVTLCLELNSNKVTKLKTMNYVALVVGFVLPFGTLSICYLLIIRALLKVEVPESGLRLSHRKALITVIIALIIFLLCFLPYHVLRTLHLLEWKADKCKDRLHKAVAVTLALAAANSCFNPFLYYFAGENFKDRLKSALRKGRPQKTRCGFSVCVWLKKETRV.

The Extracellular segment spans residues 1-43; it reads MERKLMSLLPSISLSEMEPNSTLGNHNSNRSCTTENFKREFYP. Residues Asn-20 and Asn-29 are each glycosylated (N-linked (GlcNAc...) asparagine). Residues 44-64 traverse the membrane as a helical segment; it reads IVYLVIFIWGALGNGFSIYVF. Topologically, residues 65–73 are cytoplasmic; that stretch reads LKPYKKSTS. Residues 74 to 94 form a helical membrane-spanning segment; sequence VNVFMLNLAISDLLFTITLPF. The Extracellular segment spans residues 95–124; sequence RVDYYLRGSNXIFGDTPCRIMSYSMYVNMY. Residues Cys-112 and Cys-188 are joined by a disulfide bond. A helical membrane pass occupies residues 125-145; it reads SSIYFLTVLSVVRFLATVHPF. At 146-154 the chain is on the cytoplasmic side; the sequence is RLLHTTSIK. A helical transmembrane segment spans residues 155–175; the sequence is NAWILCGVIWIFIMASSTVLL. At 176-205 the chain is on the extracellular side; it reads KNGSEQKDNVTLCLELNSNKVTKLKTMNYV. N-linked (GlcNAc...) asparagine glycosylation is found at Asn-177 and Asn-184. A helical transmembrane segment spans residues 206 to 226; it reads ALVVGFVLPFGTLSICYLLII. The Cytoplasmic segment spans residues 227–246; sequence RALLKVEVPESGLRLSHRKA. A helical membrane pass occupies residues 247–267; that stretch reads LITVIIALIIFLLCFLPYHVL. Residues 268–287 lie on the Extracellular side of the membrane; that stretch reads RTLHLLEWKADKCKDRLHKA. A helical transmembrane segment spans residues 288–308; sequence VAVTLALAAANSCFNPFLYYF. Residues 309-345 are Cytoplasmic-facing; that stretch reads AGENFKDRLKSALRKGRPQKTRCGFSVCVWLKKETRV.

This sequence belongs to the G-protein coupled receptor 1 family.

It is found in the cell membrane. Receptor for cysteinyl leukotrienes. The response is mediated via a G-protein that activates a phosphatidylinositol-calcium second messenger system. This Sus scrofa (Pig) protein is Cysteinyl leukotriene receptor 2 (CYSLTR2).